Here is a 279-residue protein sequence, read N- to C-terminus: MDRTQTFIKDCLFTKCLEDPEKPFNENRFQDTLLLLPTDGGLTSRLQRQQRKSKLNLDNLQKVSQLESADKQLEKRDYQRINKNSKIALREYINNCKKNTKKCLKLAYENKITDKEDLLHYIEEKHPTIYESLPQYVDFVPMYKELWINYIKELLNITKNLKTFNGSLALLKLSMADYNGALLRVTKSKNKTLIGLQGIVIWDSQKFFIMIVKGNIIDEIKCIPKKGTVFQFEIPISDDDDSALRYSILGDRFKYRSVDRAGRKFKSRRCDDMLYYIQN.

Residue Ser64 is modified to Phosphoserine.

This sequence belongs to the eukaryotic/archaeal RNase P protein component 1 family. As to quaternary structure, component of nuclear RNase P and RNase MRP complexes. RNase P consists of an RNA moiety and at least 9 protein subunits including POP1, POP3, POP4, POP5, POP6, POP7, POP8, RPP1 and RPR2. RNase MRP complex consists of an RNA moiety and at least 10 protein subunits including POP1, POP3, POP4, POP5, POP6, POP7, POP8, RMP1, RPP1 and SNM1, many of which are shared with the RNase P complex.

The protein localises to the nucleus. In terms of biological role, required for 5.8S rRNA and tRNA processing; associated with RNase MRP and RNase P. The sequence is that of RNases MRP/P 32.9 kDa subunit (POP4) from Saccharomyces cerevisiae (strain ATCC 204508 / S288c) (Baker's yeast).